A 148-amino-acid polypeptide reads, in one-letter code: 3-dehydroquinate dehydratase (148 aa).

Tyr26 (proton acceptor) is an active-site residue. Substrate contacts are provided by Asn75, His81, and Asp88. The active-site Proton donor is His101. Residues 102–103 and Arg112 each bind substrate; that span reads LS.

The protein belongs to the type-II 3-dehydroquinase family. Homododecamer.

It catalyses the reaction 3-dehydroquinate = 3-dehydroshikimate + H2O. It functions in the pathway metabolic intermediate biosynthesis; chorismate biosynthesis; chorismate from D-erythrose 4-phosphate and phosphoenolpyruvate: step 3/7. In terms of biological role, catalyzes a trans-dehydration via an enolate intermediate. The chain is 3-dehydroquinate dehydratase from Shewanella frigidimarina (strain NCIMB 400).